Consider the following 308-residue polypeptide: Cell division protein FtsX (308 aa).

The Extracellular segment spans residues 1-24; the sequence is MISRFFRHLFEALKSLKRNGWMTV. A helical transmembrane segment spans residues 25 to 45; it reads AAVSSVMITLTLVAIFASVIF. Residues 46-178 lie on the Cytoplasmic side of the membrane; it reads NTAKLATDIE…NTERLFKLAS (133 aa). Residues 179–199 form a helical membrane-spanning segment; it reads FIRVWGLGIAALLIFIAAFLI. Residues 200–236 are Extracellular-facing; it reads SNTIRITIISRSREIQIMRLVGAKNSYIRGPFLLEGA. The chain crosses the membrane as a helical span at residues 237–257; it reads FIGLLGAIAPSVLVFIVYQIV. Over 258–276 the chain is Cytoplasmic; that stretch reads YQSVNKSLVGQNLSMISPD. Residues 277–297 form a helical membrane-spanning segment; the sequence is LFSPLMIALLFVIGVFIGSLG. The Extracellular portion of the chain corresponds to 298 to 308; sequence SGISMRRFLKI.

It belongs to the ABC-4 integral membrane protein family. FtsX subfamily. As to quaternary structure, interacts with FtsE. Interacts (via large extracellular loop) with PcsB (via N-terminal coiled coil domain). This interaction directs PcsB to equatorial and septal sites of dividing cells.

The protein localises to the cell membrane. In terms of biological role, part of the ABC transporter FtsEX involved in asymmetric cellular division facilitating the initiation of sporulation. Required in maintaining normal growth and cellular morphology. This chain is Cell division protein FtsX, found in Streptococcus pneumoniae (strain ATCC BAA-255 / R6).